A 333-amino-acid chain; its full sequence is MRIAVMGAGAWGTALALSLCASTASSHQVTLWTRSRQHLADLVSQRINRRYFSAFPLPASLRLTAGLEEAVEDAELALIVVPVSGLRETLREIAASGKKIPVIWGCKGFESQSAKLPHQVAEEEYAGAAPYGVLSGPSFALEIAQGLPAALTLASRDGEFAREVAAQLHAPRLRVYSCTDVVGVETGGAVKNVISIAAGICDGMGFGSNARAALITRGLAEITRLGLKLGGRMETFLGLTGVGDLILTCTGDLSRNRRVGLALAAGRSLPDILQELGHIAEGVHTAREVLRLSHLLGIEMPITKGVCSILDDGVPAGQAVEALLNREPKSEIY.

Residues Trp-11, Arg-34, and Lys-107 each coordinate NADPH. Positions 107, 136, and 138 each coordinate sn-glycerol 3-phosphate. Ala-140 is a binding site for NADPH. 5 residues coordinate sn-glycerol 3-phosphate: Lys-191, Asp-244, Ser-254, Arg-255, and Asn-256. Lys-191 serves as the catalytic Proton acceptor. Arg-255 serves as a coordination point for NADPH. NADPH-binding residues include Ile-279 and Glu-281.

It belongs to the NAD-dependent glycerol-3-phosphate dehydrogenase family.

It is found in the cytoplasm. It carries out the reaction sn-glycerol 3-phosphate + NAD(+) = dihydroxyacetone phosphate + NADH + H(+). The enzyme catalyses sn-glycerol 3-phosphate + NADP(+) = dihydroxyacetone phosphate + NADPH + H(+). It functions in the pathway membrane lipid metabolism; glycerophospholipid metabolism. Catalyzes the reduction of the glycolytic intermediate dihydroxyacetone phosphate (DHAP) to sn-glycerol 3-phosphate (G3P), the key precursor for phospholipid synthesis. The protein is Glycerol-3-phosphate dehydrogenase [NAD(P)+] of Nitrosospira multiformis (strain ATCC 25196 / NCIMB 11849 / C 71).